The chain runs to 372 residues: NAD(P)H-quinone oxidoreductase subunit 1, chloroplastic (372 aa).

8 consecutive transmembrane segments (helical) span residues 28 to 48, 65 to 85, 97 to 117, 128 to 148, 166 to 186, 254 to 274, 312 to 332, and 352 to 372; these read IWICIPILVVVLGSTLGVLVI, PEYAGPLGIIQALIDGLKLIL, WLFTLGPAIVVIPIVLSYLVV, IGIGIFFWIAISSVAPMGLLI, AAQAISYEIPLALCVLAIILM, FGLFYVASYINLLVSALFVSV, GIIGLGITLVKAYIFLFLAVL, and FLLPVCLGNLLLTASFQITLL.

It belongs to the complex I subunit 1 family. NDH is composed of at least 16 different subunits, 5 of which are encoded in the nucleus.

The protein localises to the plastid. It is found in the chloroplast thylakoid membrane. It catalyses the reaction a plastoquinone + NADH + (n+1) H(+)(in) = a plastoquinol + NAD(+) + n H(+)(out). The catalysed reaction is a plastoquinone + NADPH + (n+1) H(+)(in) = a plastoquinol + NADP(+) + n H(+)(out). In terms of biological role, NDH shuttles electrons from NAD(P)H:plastoquinone, via FMN and iron-sulfur (Fe-S) centers, to quinones in the photosynthetic chain and possibly in a chloroplast respiratory chain. The immediate electron acceptor for the enzyme in this species is believed to be plastoquinone. Couples the redox reaction to proton translocation, and thus conserves the redox energy in a proton gradient. The polypeptide is NAD(P)H-quinone oxidoreductase subunit 1, chloroplastic (Staurastrum punctulatum (Green alga)).